Here is a 393-residue protein sequence, read N- to C-terminus: S-adenosylmethionine synthase (393 aa).

Glutamate 9 contributes to the Mg(2+) binding site. Histidine 15 is an ATP binding site. A K(+)-binding site is contributed by glutamate 43. Residues glutamate 56 and glutamine 99 each contribute to the L-methionine site. ATP is bound by residues 167 to 169 (DGK), 235 to 238 (SGRF), aspartate 246, 252 to 253 (RK), alanine 269, lysine 273, and lysine 277. Aspartate 246 serves as a coordination point for L-methionine. Lysine 277 contributes to the L-methionine binding site.

Belongs to the AdoMet synthase family. In terms of assembly, homotetramer. Mn(2+) serves as cofactor. The cofactor is Mg(2+). Requires Co(2+) as cofactor. It depends on K(+) as a cofactor.

It is found in the cytoplasm. It carries out the reaction L-methionine + ATP + H2O = S-adenosyl-L-methionine + phosphate + diphosphate. The protein operates within amino-acid biosynthesis; S-adenosyl-L-methionine biosynthesis; S-adenosyl-L-methionine from L-methionine: step 1/1. Its function is as follows. Catalyzes the formation of S-adenosylmethionine from methionine and ATP. The reaction comprises two steps that are both catalyzed by the same enzyme: formation of S-adenosylmethionine (AdoMet) and triphosphate, and subsequent hydrolysis of the triphosphate. This Gossypium hirsutum (Upland cotton) protein is S-adenosylmethionine synthase (SAMS).